Consider the following 417-residue polypeptide: Protein FAM181B (417 aa).

The interval 104–147 (CSGLMGTAPPRPASPSAADAPAKRPPGAPTVATPAHCKAAPRRE) is disordered.

It belongs to the FAM181 family.

This is Protein FAM181B (Fam181b) from Mus musculus (Mouse).